The primary structure comprises 200 residues: Troponin I-like protein (200 aa).

Disordered stretches follow at residues 1-20 (MGDEEKRKMEEKERKKAEVR) and 181-200 (ENKADKKPEWALGSKKENEE). The stretch at 2 to 116 (GDEEKRKMEE…EDAKYDLEYE (115 aa)) forms a coiled coil.

Belongs to the troponin I family. Expressed in salivary gland, gut, muscle and cuticle (at protein level).

Inhibits endothelial cell proliferation and angiogenesis in a vertebrate host. Probably required for efficient blood feeding on vertebrate hosts. In Haemaphysalis longicornis (Bush tick), this protein is Troponin I-like protein.